The following is a 363-amino-acid chain: Type 3 secretion system translocon protein SctB (363 aa).

Polar residues predominate over residues 1 to 16 (MEIQNTKPTQTLYTDI). The interval 1–30 (MEIQNTKPTQTLYTDISTKQTQSSSETQKS) is disordered. The span at 17–30 (STKQTQSSSETQKS) shows a compositional bias: low complexity. The segment at 33-73 (YQQIAAHIPLNVGKNPVLTTTLNDDQLLKLSEQVQHDSEII) is ipgC chaperone binding domain. A helical transmembrane segment spans residues 99–120 (ISSLSSNAVSLIISVAVLLSAL).

The protein belongs to the SctB/SipC family. The core secretion machinery of the T3SS is composed of approximately 20 different proteins, including cytoplasmic components, a base, an export apparatus and a needle. This subunit is involved in the formation of a pore, called the translocon, in host membrane. Interacts with IpaB/SctE. Interacts with the molecular chaperone IpgC, which prevents premature association with IpaB/SctE within the cytoplasm of Shigella cells. Does not interact with CDC42 or RAC1 GTPases in vitro.

The protein localises to the secreted. Its subcellular location is the host membrane. Its activity is regulated as follows. Interaction with the membrane is affected by the pH. Its function is as follows. Component of the type III secretion system (T3SS), also called injectisome, which is used to inject bacterial effector proteins into eukaryotic host cells. IpaB/SctE and IpaC/SctB are inserted into the host membrane where they form a pore and allow the translocation of effector proteins into the cytosol of target cells. Induction and secretion of IpaC/SctB comprise the final step in triggering the induction of full type III secretion. Functionally, required for efficient dissemination. Necessary for lysis of the two cellular membranes that surround bacteria in protrusions during cell-to-cell spread. Contribute to actin nucleation in vitro, which may be a necessary step in Shigella invasion. The sequence is that of Type 3 secretion system translocon protein SctB from Shigella flexneri.